Reading from the N-terminus, the 451-residue chain is UDP-N-acetylmuramate--L-alanine ligase (451 aa).

110-116 (GTHGKTT) is an ATP binding site.

Belongs to the MurCDEF family.

It is found in the cytoplasm. The enzyme catalyses UDP-N-acetyl-alpha-D-muramate + L-alanine + ATP = UDP-N-acetyl-alpha-D-muramoyl-L-alanine + ADP + phosphate + H(+). It participates in cell wall biogenesis; peptidoglycan biosynthesis. Functionally, cell wall formation. The protein is UDP-N-acetylmuramate--L-alanine ligase of Francisella tularensis subsp. holarctica (strain FTNF002-00 / FTA).